A 697-amino-acid polypeptide reads, in one-letter code: MEIEPVVRISFNGNNNQNNNNNNNNNTNNNSNNNNNNNNSSNINSTNKPSVKKPINQKMISNINNQKSPNPLNSSVDDNNNTNNNNNSNSNGTDEDIIKLARDLTNTFGILLGDSDQPSQFSDVIFKVGDRKFFASKIMLVARSEYFKAMFTGSMKESSIKEITLEGVDPDVFFTVLKYICIGILDLDYDHRMVSSIYQYCDLLGLQRGKELSLATMGKIAQMYLEKPDVESALFLWDSLNQSAIPVESVHPHLRAFVLQYASISLHCDAFYSISLTTLVQMLRNDGLRMEELDILDCVIDWCRENSQASIQQQQQQQQQQLQSANGASGKSHGKRSSSSHLKKHDGDGGSDGSCSSRCSSRRNSLSLKDHHRQHIGNGGGGGGHYNNNDCHSDTEETYSDIDDEEHRNGGGGVGDDFENDSEDGDDDDEDDDEDDDFTDDDDKDDSANDDYEYSTNKDDLDIIEDWDTTIDKNLLDEVLPLIRWENMNIGEAFERLDNLKIIPDKEISNLLRHILKSNRGESFSFLGYHYRRPRNNRKRPYPIEFLLGITQPFDSNVTNEIIPLNSFSSEFGQSTNQFLYRIKKDIKLPANLERFSFKDREFFVQLKEREKGQLAVYLAFGSKLTKPLAISVLASVIGFRFQDSIEFSFKKMFDEGFDSAWGWPKFISLDTLYKQDKYSHYSDSFCLLIELTSQWG.

Residues 1 to 94 are disordered; sequence MEIEPVVRIS…NNNSNSNGTD (94 aa). A compositionally biased stretch (low complexity) spans 12 to 47; sequence NGNNNQNNNNNNNNNTNNNSNNNNNNNNSSNINSTN. Residues 58 to 72 show a composition bias toward polar residues; it reads KMISNINNQKSPNPL. Positions 73–91 are enriched in low complexity; it reads NSSVDDNNNTNNNNNSNSN. The BTB domain maps to 122 to 189; that stretch reads SDVIFKVGDR…ICIGILDLDY (68 aa). The tract at residues 311–455 is disordered; it reads IQQQQQQQQQ…DSANDDYEYS (145 aa). Residues 312-331 are compositionally biased toward low complexity; it reads QQQQQQQQQQLQSANGASGK. The span at 332–344 shows a compositional bias: basic residues; the sequence is SHGKRSSSSHLKK. Over residues 353 to 363 the composition is skewed to low complexity; it reads GSCSSRCSSRR. Residues 416 to 453 are compositionally biased toward acidic residues; that stretch reads DDFENDSEDGDDDDEDDDEDDDFTDDDDKDDSANDDYE.

Expressed strongly in presumptive spore (prespore or psp) cells during the late G2 phase of cell cycle. Present at a low level in vegetative cells.

Functionally, required for normal morphogenesis and cell-type stability. This Dictyostelium discoideum (Social amoeba) protein is Trishanku (triA).